The primary structure comprises 185 residues: Ribosome-recycling factor (185 aa).

It belongs to the RRF family.

The protein resides in the cytoplasm. Responsible for the release of ribosomes from messenger RNA at the termination of protein biosynthesis. May increase the efficiency of translation by recycling ribosomes from one round of translation to another. The chain is Ribosome-recycling factor from Shewanella baltica (strain OS223).